The following is a 495-amino-acid chain: Carotenoid 3,4-desaturase (495 aa).

Belongs to the carotenoid/retinoid oxidoreductase family.

The catalysed reaction is dihydroisopentenyldehydrorhodopin + A = isopentenyldehydrorhodopin + AH2. The enzyme catalyses dihydrobisanhydrobacterioruberin + A = bisanhydrobacterioruberin + AH2. It functions in the pathway carotenoid biosynthesis. Involved in the biosynthesis of the acyclic C50 carotenoid bacterioruberin (BR). CrtD is involved in the desaturation reactions that form double bonds at C-3,4 of dihydroisopentenyldehydrorhodopin (DH-IDR) and C-3',4' of dihydrobisanhydrobacterioruberin (DH-BABR) to yield isopentenyld ehydrorhodopin (IDR) and bisanhydrobacterioruberin (BABR), respectively. The polypeptide is Carotenoid 3,4-desaturase (Haloarcula japonica (strain ATCC 49778 / DSM 6131 / JCM 7785 / NBRC 101032 / NCIMB 13157 / TR-1)).